The primary structure comprises 89 residues: DNA/RNA-binding protein Alba (89 aa).

N6-acetyllysine is present on Lys-11.

Belongs to the histone-like Alba family. Post-translationally, acetylated. Acetylation at Lys-11 decreases DNA-binding affinity.

It localises to the cytoplasm. Its subcellular location is the chromosome. Functionally, binds double-stranded DNA tightly but without sequence specificity. Involved in DNA compaction. This chain is DNA/RNA-binding protein Alba, found in Thermoplasma acidophilum (strain ATCC 25905 / DSM 1728 / JCM 9062 / NBRC 15155 / AMRC-C165).